A 926-amino-acid chain; its full sequence is Ubiquitin carboxyl-terminal hydrolase 4 (926 aa).

The 124-residue stretch at 205 to 328 folds into the Rhodanese domain; it reads SQMEILLIDI…WLKSNYGRQV (124 aa). Ser443 carries the post-translational modification Phosphoserine. The USP domain maps to 562–923; it reads VGLENLGNSC…NAYVLFYHRV (362 aa). Cys571 functions as the Nucleophile in the catalytic mechanism. The Proton acceptor role is filled by His880.

This sequence belongs to the peptidase C19 family. In terms of assembly, interacts with BRO1, RFU1 and VPS32. Associates with the 26S proteasome.

The protein resides in the cytoplasm. It is found in the late endosome membrane. It carries out the reaction Thiol-dependent hydrolysis of ester, thioester, amide, peptide and isopeptide bonds formed by the C-terminal Gly of ubiquitin (a 76-residue protein attached to proteins as an intracellular targeting signal).. RFU1 is an inhibitor of deubiquitination activity. Ubiquitin thioesterase that acts at the late endosome/prevacuolar compartment to recover ubiquitin from ubiquitinated membrane proteins en route to the vacuole. Also removes ubiquitin from soluble proteins targeted to proteasomes. Is essential to maintain a normal level of free ubiquitin. Involved in the ammonium-induced down-regulation of the GAP1 permease and the UME3 destruction in response to oxidative stress. Has a role in the RAD9 checkpoint response to TOP1 poisons. Required for promoting coordination of DNA replication and avoids DNA overreplication. This Saccharomyces cerevisiae (strain RM11-1a) (Baker's yeast) protein is Ubiquitin carboxyl-terminal hydrolase 4 (DOA4).